Consider the following 473-residue polypeptide: Keratin, type I cytoskeletal 16 (473 aa).

A head region spans residues 1–116 (MTTCSRQFTS…AGGDGLLVGS (116 aa)). The interval 117–152 (EKVTMQNLNDRLASYLDKVRALEEANADLEVKIRDW) is coil 1A. One can recognise an IF rod domain in the interval 117 to 428 (EKVTMQNLND…RLLEGEDAHL (312 aa)). The linker 1 stretch occupies residues 153 to 170 (YQRQRPSEIKDYSPYFKT). A coil 1B region spans residues 171–262 (IEDLRNKIIA…KNHEEEMLAL (92 aa)). Residues 263–285 (RGQTGGDVNVEMDAAPGVDLSRI) are linker 12. The segment at 286-424 (LNEMRDQYEQ…ATYRRLLEGE (139 aa)) is coil 2. The interval 425–473 (DAHLSSQQASGQSYSSREVFTSSSSSSSRQTRPILKEQSSSSFSQGQSS) is tail. The interval 428–473 (LSSQQASGQSYSSREVFTSSSSSSSRQTRPILKEQSSSSFSQGQSS) is disordered. Low complexity-rich tracts occupy residues 429 to 452 (SSQQASGQSYSSREVFTSSSSSSS) and 462 to 473 (QSSSSFSQGQSS).

Belongs to the intermediate filament family. In terms of assembly, heterodimer of a type I and a type II keratin. KRT16 associates with KRT6 isomers (KRT6A or KRT6B). Interacts with TCHP. Interacts with TRADD. Expressed in the corneal epithelium (at protein level).

In terms of biological role, epidermis-specific type I keratin that plays a key role in skin. Acts as a regulator of innate immunity in response to skin barrier breach: required for some inflammatory checkpoint for the skin barrier maintenance. The polypeptide is Keratin, type I cytoskeletal 16 (KRT16) (Homo sapiens (Human)).